Here is a 92-residue protein sequence, read N- to C-terminus: Protein LSO2 (92 aa).

Composition is skewed to basic and acidic residues over residues 1-10 (MGKRFSESAA) and 38-72 (EASKWEQGSRKENAKKLEEEQKRQEKARAKKERDA). Residues 1–92 (MGKRFSESAA…KGGKGKRKMK (92 aa)) are disordered. Residues 17-80 (ARKRDQAHAK…DALLTAEEEQ (64 aa)) adopt a coiled-coil conformation.

This sequence belongs to the CCDC124 family. As to quaternary structure, associates with translationally inactive ribosomes in the nonrotated state. LSO2 bridges the decoding sites of the small with the GTPase activating center (GAC) of the large subunit. This position allows accommodation of the DOM34-dependent ribosome recycling system, which splits LSO2-containing ribosomes.

It localises to the nucleus. The protein localises to the cytoplasm. Its function is as follows. Ribosome-binding protein involved in ribosome hibernation by associating with translationally inactive ribosomes. Required for translational recovery after starvation from stationary phase. May facilitate rapid translation reactivation by stabilizing the recycling-competent state of inactive ribosomes. This chain is Protein LSO2, found in Saccharomyces cerevisiae (strain ATCC 204508 / S288c) (Baker's yeast).